Consider the following 367-residue polypeptide: Choline-phosphate cytidylyltransferase A (367 aa).

Met1 is modified (N-acetylmethionine). The interval 1 to 32 is disordered; that stretch reads MDAQSSAKVNSRKRRKEAPGPNGATEEDGIPS. Lys8 bears the N6-acetyllysine mark. The CTP site is built by Ile84, Phe85, His92, and Lys122. Phosphocholine contacts are provided by Lys122 and Trp151. 7 residues coordinate CTP: His168, Asp169, Tyr173, Gln195, Arg196, Thr197, and Ile200. Amphipathic stretches follow at residues 228–287 and 298–315; these read KELN…EFIG and ALKHMLKEGKGRMLQAIS. The residue at position 233 (Ser233) is a Phosphoserine. The autoinhibitory (AI) stretch occupies residues 272–293; the sequence is IDLIQKWEEKSREFIGSFLEMF. The disordered stretch occupies residues 313–367; sequence AISPKQSPSSSPTHERSPSPSFRWPFSGKTSPSSSPASLSRCRAVTCDISEDEED. Ser315, Ser319, Ser321, Ser322, and Ser323 each carry phosphoserine. Positions 315–324 are enriched in polar residues; that stretch reads SPKQSPSSSP. Repeat 1 spans residues 319–324; sequence SPSSSP. Residues 319 to 348 are 3 X repeats; the sequence is SPSSSPTHERSPSPSFRWPFSGKTSPSSSP. Thr325 is subject to Phosphothreonine. Ser329, Ser331, and Ser333 each carry phosphoserine. The stretch at 329 to 333 is one 2; approximate repeat; that stretch reads SPSPS. Low complexity predominate over residues 330–352; sequence PSPSFRWPFSGKTSPSSSPASLS. Position 342 is a phosphothreonine (Thr342). Phosphoserine is present on residues Ser343, Ser345, Ser346, Ser347, Ser350, and Ser352. The stretch at 343-348 is repeat 3; the sequence is SPSSSP. Thr358 is modified (phosphothreonine). Phosphoserine is present on Ser362.

This sequence belongs to the cytidylyltransferase family. As to quaternary structure, homodimer. In terms of processing, the serine residues of the C-terminus are phosphorylated. The inactive soluble form is stabilized by phosphorylation, the active membrane bound form is promoted by anionic lipids or diacylglycerol, and is stabilized by dephosphorylation. Post-translationally, monoubiquitinated by the SCF(FBXL2) complex, leading to proteasomal degradation. As to expression, brain and liver (at protein level). Also found in heart, kidney, spleen, lung, skeletal muscle, ovary and testis.

It localises to the cytoplasm. The protein localises to the cytosol. It is found in the membrane. Its subcellular location is the endoplasmic reticulum membrane. The protein resides in the nucleus. The enzyme catalyses phosphocholine + CTP + H(+) = CDP-choline + diphosphate. Its pathway is phospholipid metabolism; phosphatidylcholine biosynthesis; phosphatidylcholine from phosphocholine: step 1/2. Its activity is regulated as follows. Interconverts between an inactive cytosolic form and an active membrane-bound form. Activation involves disruption of an inhibitory interaction between helices at the base of the active site and the autoinhibitory (AI) region. In terms of biological role, catalyzes the key rate-limiting step in the CDP-choline pathway for phosphatidylcholine biosynthesis. The polypeptide is Choline-phosphate cytidylyltransferase A (Pcyt1a) (Mus musculus (Mouse)).